A 175-amino-acid polypeptide reads, in one-letter code: Isopentenyl-diphosphate Delta-isomerase (175 aa).

The Mn(2+) site is built by histidine 22 and histidine 29. In terms of domain architecture, Nudix hydrolase spans 27–160; the sequence is KLHRAFSVLL…PAAYTPWLAE (134 aa). Cysteine 64 is a catalytic residue. Cysteine 64 serves as a coordination point for Mg(2+). Histidine 66 provides a ligand contact to Mn(2+). A Mg(2+)-binding site is contributed by glutamate 84. Mn(2+)-binding residues include glutamate 110 and glutamate 112. Glutamate 112 is a catalytic residue.

It belongs to the IPP isomerase type 1 family. It depends on Mg(2+) as a cofactor. Requires Mn(2+) as cofactor.

The protein resides in the cytoplasm. It catalyses the reaction isopentenyl diphosphate = dimethylallyl diphosphate. It participates in isoprenoid biosynthesis; dimethylallyl diphosphate biosynthesis; dimethylallyl diphosphate from isopentenyl diphosphate: step 1/1. Functionally, catalyzes the 1,3-allylic rearrangement of the homoallylic substrate isopentenyl (IPP) to its highly electrophilic allylic isomer, dimethylallyl diphosphate (DMAPP). The polypeptide is Isopentenyl-diphosphate Delta-isomerase (Nocardia farcinica (strain IFM 10152)).